Here is a 183-residue protein sequence, read N- to C-terminus: Glutathione-regulated potassium-efflux system ancillary protein KefG (183 aa).

It belongs to the NAD(P)H dehydrogenase (quinone) family. KefG subfamily. In terms of assembly, interacts with KefB.

Its subcellular location is the cell inner membrane. The enzyme catalyses a quinone + NADH + H(+) = a quinol + NAD(+). The catalysed reaction is a quinone + NADPH + H(+) = a quinol + NADP(+). Its function is as follows. Regulatory subunit of a potassium efflux system that confers protection against electrophiles. Required for full activity of KefB. In Salmonella paratyphi B (strain ATCC BAA-1250 / SPB7), this protein is Glutathione-regulated potassium-efflux system ancillary protein KefG.